Here is a 360-residue protein sequence, read N- to C-terminus: MRVFNFSAGPAAMPEEVLRQAADEMLDWHGSGMSVMEMSHRGKEFMSIHEAALTDLRDLLGVPASHRILFLQGGGIAENAIVPMNLLGARKTADFVVTGSWSQKSFGEAKKFCTPHLAASGKTEAGFTRAPARAEWQLSDDPAYVHLCTNETIDGVETFEIPDLGDVPLVADVSSHILSRPMDVAKYGVLFGGAQKNIGMAGVTVVIVREDLLDRALSICPSAFEWKTVAANNSLYNTPPTYAIYIAGLVFQWLKRQGGLEAIEARNIEKSKLLYDTIDASSFYLNKVEPAARSRMNVPFFLADETRNEDFLAGAKARGLLQLKGHKSVGGMRASIYNAVPLEGVKALVEYMKDFEQRGA.

Residue arginine 41 participates in L-glutamate binding. Pyridoxal 5'-phosphate-binding residues include tryptophan 101, threonine 152, aspartate 172, and glutamine 195. The residue at position 196 (lysine 196) is an N6-(pyridoxal phosphate)lysine. 237–238 (NT) is a pyridoxal 5'-phosphate binding site.

This sequence belongs to the class-V pyridoxal-phosphate-dependent aminotransferase family. SerC subfamily. In terms of assembly, homodimer. Requires pyridoxal 5'-phosphate as cofactor.

Its subcellular location is the cytoplasm. The enzyme catalyses O-phospho-L-serine + 2-oxoglutarate = 3-phosphooxypyruvate + L-glutamate. It carries out the reaction 4-(phosphooxy)-L-threonine + 2-oxoglutarate = (R)-3-hydroxy-2-oxo-4-phosphooxybutanoate + L-glutamate. The protein operates within amino-acid biosynthesis; L-serine biosynthesis; L-serine from 3-phospho-D-glycerate: step 2/3. It participates in cofactor biosynthesis; pyridoxine 5'-phosphate biosynthesis; pyridoxine 5'-phosphate from D-erythrose 4-phosphate: step 3/5. In terms of biological role, catalyzes the reversible conversion of 3-phosphohydroxypyruvate to phosphoserine and of 3-hydroxy-2-oxo-4-phosphonooxybutanoate to phosphohydroxythreonine. The protein is Phosphoserine aminotransferase of Burkholderia orbicola (strain MC0-3).